The chain runs to 155 residues: Xanthine-guanine phosphoribosyltransferase (155 aa).

Residues 37 to 38 (RG), arginine 69, and 90 to 98 (DDLVDTGGT) contribute to the 5-phospho-alpha-D-ribose 1-diphosphate site. Arginine 69 serves as a coordination point for GMP. Aspartate 91 contacts Mg(2+). Guanine-binding residues include aspartate 94 and isoleucine 137. Residues aspartate 94 and isoleucine 137 each coordinate xanthine. GMP-binding positions include 94 to 98 (DTGGT) and 136 to 137 (WI).

The protein belongs to the purine/pyrimidine phosphoribosyltransferase family. XGPT subfamily. As to quaternary structure, homotetramer. It depends on Mg(2+) as a cofactor.

It localises to the cell inner membrane. It catalyses the reaction GMP + diphosphate = guanine + 5-phospho-alpha-D-ribose 1-diphosphate. It carries out the reaction XMP + diphosphate = xanthine + 5-phospho-alpha-D-ribose 1-diphosphate. The enzyme catalyses IMP + diphosphate = hypoxanthine + 5-phospho-alpha-D-ribose 1-diphosphate. The protein operates within purine metabolism; GMP biosynthesis via salvage pathway; GMP from guanine: step 1/1. It participates in purine metabolism; XMP biosynthesis via salvage pathway; XMP from xanthine: step 1/1. Its function is as follows. Purine salvage pathway enzyme that catalyzes the transfer of the ribosyl-5-phosphate group from 5-phospho-alpha-D-ribose 1-diphosphate (PRPP) to the N9 position of the 6-oxopurines guanine and xanthine to form the corresponding ribonucleotides GMP (guanosine 5'-monophosphate) and XMP (xanthosine 5'-monophosphate), with the release of PPi. To a lesser extent, also acts on hypoxanthine. This chain is Xanthine-guanine phosphoribosyltransferase, found in Aeromonas salmonicida (strain A449).